The primary structure comprises 2240 residues: Cadherin-89D (2240 aa).

5 consecutive Cadherin domains span residues 70-179, 180-295, 296-411, 412-528, and 529-643; these read SEGV…APEF, LNVP…PPKF, TEGV…VPEF, EADY…TPKF, and EHGN…APYE. Asparagine 114, asparagine 119, asparagine 191, asparagine 278, asparagine 334, asparagine 417, asparagine 585, asparagine 720, asparagine 752, asparagine 822, asparagine 833, asparagine 983, asparagine 989, asparagine 1006, asparagine 1255, asparagine 1318, asparagine 1486, asparagine 1529, and asparagine 1556 each carry an N-linked (GlcNAc...) asparagine glycan. Positions 814–844 are disordered; it reads MPSEPTSRNITMGSRFRSRNRSRSSKSKRRL. Cadherin domains are found at residues 824–927, 928–1087, 1171–1284, 1285–1389, and 1411–1520; these read TMGS…APKF, NALT…APMF, TTKC…APTF, KKSW…RPEF, and MLPV…PPKS. Basic residues predominate over residues 829–844; the sequence is FRSRNRSRSSKSKRRL. Cadherin domains follow at residues 1534–1660 and 1661–1774; these read QHAY…APKF and RGNG…MPVE. Residues 1884 to 1904 form a helical membrane-spanning segment; it reads FVTVVLLALISLGALIAACCY. Topologically, residues 1905–2240 are cytoplasmic; sequence VCMRQKRRLW…LEFSKSNSLF (336 aa). Disordered regions lie at residues 1930–1972 and 2121–2140; these read IAGI…PESV and AHLELRQPNTDSSDTYEDSL. Over residues 1939 to 1952 the composition is skewed to basic residues; it reads QKQRRQRQQRHTQR. Positions 1953–1964 are enriched in polar residues; the sequence is CSKGSTGSQRPT.

The protein resides in the cell membrane. Functionally, cadherins are calcium-dependent cell adhesion proteins. They preferentially interact with themselves in a homophilic manner in connecting cells. The chain is Cadherin-89D (Cad89D) from Drosophila melanogaster (Fruit fly).